Reading from the N-terminus, the 334-residue chain is Dihydroorotate dehydrogenase (quinone) (334 aa).

FMN is bound by residues 61–65 and threonine 85; that span reads AGLDK. Lysine 65 is a binding site for substrate. 110-114 serves as a coordination point for substrate; the sequence is NRMGF. FMN is bound by residues asparagine 138 and asparagine 171. A substrate-binding site is contributed by asparagine 171. The Nucleophile role is filled by serine 174. Asparagine 176 is a substrate binding site. FMN contacts are provided by lysine 216 and threonine 244. 245–246 serves as a coordination point for substrate; it reads NT. Residues glycine 266, glycine 295, and 316–317 contribute to the FMN site; that span reads YT.

This sequence belongs to the dihydroorotate dehydrogenase family. Type 2 subfamily. In terms of assembly, monomer. Requires FMN as cofactor.

It is found in the cell membrane. It carries out the reaction (S)-dihydroorotate + a quinone = orotate + a quinol. It functions in the pathway pyrimidine metabolism; UMP biosynthesis via de novo pathway; orotate from (S)-dihydroorotate (quinone route): step 1/1. Functionally, catalyzes the conversion of dihydroorotate to orotate with quinone as electron acceptor. The polypeptide is Dihydroorotate dehydrogenase (quinone) (Idiomarina loihiensis (strain ATCC BAA-735 / DSM 15497 / L2-TR)).